The following is a 345-amino-acid chain: Anthranilate phosphoribosyltransferase (345 aa).

Residues Gly80, 83 to 84 (GD), Thr88, 90 to 93 (NIST), 108 to 116 (KHGNRSVSS), and Ser120 each bind 5-phospho-alpha-D-ribose 1-diphosphate. Position 80 (Gly80) interacts with anthranilate. Ser92 is a Mg(2+) binding site. Asn111 contributes to the anthranilate binding site. Arg166 is an anthranilate binding site. Residues Asp225 and Glu226 each contribute to the Mg(2+) site.

Belongs to the anthranilate phosphoribosyltransferase family. In terms of assembly, homodimer. Mg(2+) serves as cofactor.

It carries out the reaction N-(5-phospho-beta-D-ribosyl)anthranilate + diphosphate = 5-phospho-alpha-D-ribose 1-diphosphate + anthranilate. Its pathway is amino-acid biosynthesis; L-tryptophan biosynthesis; L-tryptophan from chorismate: step 2/5. Its function is as follows. Catalyzes the transfer of the phosphoribosyl group of 5-phosphorylribose-1-pyrophosphate (PRPP) to anthranilate to yield N-(5'-phosphoribosyl)-anthranilate (PRA). The polypeptide is Anthranilate phosphoribosyltransferase (Desulforamulus reducens (strain ATCC BAA-1160 / DSM 100696 / MI-1) (Desulfotomaculum reducens)).